The following is a 121-amino-acid chain: Putative ankyrin repeat protein L215 (121 aa).

ANK repeat units lie at residues Gln10 to Glu40 and Ile42 to Val71.

This Acanthamoeba polyphaga mimivirus (APMV) protein is Putative ankyrin repeat protein L215.